Consider the following 389-residue polypeptide: 5-hydroxytryptamine receptor 1B (389 aa).

The segment at Met1–Ser27 is disordered. The Extracellular segment spans residues Met1 to Leu45. Residues Gly15–Ser27 are compositionally biased toward polar residues. Residues Asn24 and Asn31 are each glycosylated (N-linked (GlcNAc...) asparagine). The chain crosses the membrane as a helical span at residues Pro46–Ala71. The Cytoplasmic segment spans residues Thr72 to Tyr85. Residues Leu86–Val110 form a helical membrane-spanning segment. The Extracellular segment spans residues Thr111–Gln118. A helical membrane pass occupies residues Val119–Leu144. Cys121 and Cys198 form a disulfide bridge. Ergotamine contacts are provided by Asp128 and Thr133. Residues Asp145 to Tyr147 carry the DRY motif; important for ligand-induced conformation changes and signaling motif. At Asp145–Arg164 the chain is on the cytoplasmic side. The chain crosses the membrane as a helical span at residues Ala165–Pro183. The Extracellular portion of the chain corresponds to Phe184–His204. Residue Val200 coordinates ergotamine. Residues Ile205–Gly228 traverse the membrane as a helical segment. Topologically, residues Arg229–Thr314 are cytoplasmic. Positions Asp258 to Ser271 are enriched in polar residues. The tract at residues Asp258–Gly281 is disordered. The chain crosses the membrane as a helical span at residues Leu315–Met336. Topologically, residues Pro337 to His346 are extracellular. A helical membrane pass occupies residues Leu347–Thr369. An NPxxY motif; important for ligand-induced conformation changes and signaling motif is present at residues Asn364 to Tyr368. At Met370–Ser389 the chain is on the cytoplasmic side. Cys387 is lipidated: S-palmitoyl cysteine.

It belongs to the G-protein coupled receptor 1 family. As to quaternary structure, homodimer. Heterodimer with HTR1D. Phosphorylated. Desensitization of the receptor may be mediated by its phosphorylation. Post-translationally, palmitoylated.

The protein localises to the cell membrane. Its function is as follows. G-protein coupled receptor for 5-hydroxytryptamine (serotonin). Also functions as a receptor for ergot alkaloid derivatives, various anxiolytic and antidepressant drugs and other psychoactive substances, such as lysergic acid diethylamide (LSD). Ligand binding causes a conformation change that triggers signaling via guanine nucleotide-binding proteins (G proteins) and modulates the activity of downstream effectors, such as adenylate cyclase. HTR1B is coupled to G(i)/G(o) G alpha proteins and mediates inhibitory neurotransmission by inhibiting adenylate cyclase activity. Arrestin family members inhibit signaling via G proteins and mediate activation of alternative signaling pathways. Regulates the release of 5-hydroxytryptamine, dopamine and acetylcholine in the brain, and thereby affects neural activity, nociceptive processing, pain perception, mood and behavior. Besides, plays a role in vasoconstriction of cerebral arteries. This chain is 5-hydroxytryptamine receptor 1B (HTR1B), found in Vulpes vulpes (Red fox).